We begin with the raw amino-acid sequence, 107 residues long: Ribonuclease P protein component 4 (107 aa).

Positions 62, 65, 87, and 90 each coordinate Zn(2+).

Belongs to the eukaryotic/archaeal RNase P protein component 4 family. As to quaternary structure, consists of a catalytic RNA component and at least 4-5 protein subunits. Zn(2+) is required as a cofactor.

It is found in the cytoplasm. It carries out the reaction Endonucleolytic cleavage of RNA, removing 5'-extranucleotides from tRNA precursor.. Part of ribonuclease P, a protein complex that generates mature tRNA molecules by cleaving their 5'-ends. In Archaeoglobus fulgidus (strain ATCC 49558 / DSM 4304 / JCM 9628 / NBRC 100126 / VC-16), this protein is Ribonuclease P protein component 4.